The sequence spans 159 residues: Cyclic pyranopterin monophosphate synthase (159 aa).

Residues 75–77 and 113–114 each bind substrate; these read LCH and ME. Asp-128 is an active-site residue.

It belongs to the MoaC family. Homohexamer; trimer of dimers.

It catalyses the reaction (8S)-3',8-cyclo-7,8-dihydroguanosine 5'-triphosphate = cyclic pyranopterin phosphate + diphosphate. It participates in cofactor biosynthesis; molybdopterin biosynthesis. Functionally, catalyzes the conversion of (8S)-3',8-cyclo-7,8-dihydroguanosine 5'-triphosphate to cyclic pyranopterin monophosphate (cPMP). The polypeptide is Cyclic pyranopterin monophosphate synthase (Vibrio atlanticus (strain LGP32) (Vibrio splendidus (strain Mel32))).